Reading from the N-terminus, the 130-residue chain is Splicing regulatory small protein (130 aa).

Residues 1-10 (MRTKPQRPRA) show a composition bias toward basic residues. Disordered regions lie at residues 1–29 (MRTKPQRPRATRSYLGQPCGSPRRTEETG) and 74–130 (GRAL…STRR). The mediates interaction with SRSF3 stretch occupies residues 16-22 (GQPCGSP). The span at 77–98 (LEPKADPHTCPYGRKESRGEKV) shows a compositional bias: basic and acidic residues. Positions 120–130 (SLKSGSPSTRR) are enriched in polar residues.

Interacts with SRSF3; increases SRSF3 binding to specific exons.

The protein localises to the nucleus. Functionally, interacts with the splicing factor SRSF3 and increases its binding to specific exons within pre-mRNA, thereby regulating exon-inclusion during alternative splicing. Does not directly bind pre-mRNA and could regulate a wider range of splicing factors through a similar mechanism. The sequence is that of Splicing regulatory small protein from Homo sapiens (Human).